The sequence spans 616 residues: MALLQISEPGLSAAPHQRRLAAGIDLGTTNSLVATVRSGQAETLPDHQGRYLLPSVVNYHASGLTVGYDARLNAAQDPANTISSVKRMMGRSLADIQNRYPHLPYQLQASENGLPMIQTAGGLLNPIRVSADILKALAARATEALAGELDGVVITVPAYFDDAQRQGTKDAARLAGLHVLRLLNEPTAAAIAYGLDSGQEGVIAVYDLGGGTFDISILRLSRGVFEVLATGGDSALGGDDFDHLLADYLREQAGFSDRSDNRLQRELLDAAIAAKIALSDAEAAHVEVGGWQGDITRSQFNDLIAPLVKRTLMACRRALKDAGVEAQEVLEVVMVGGSTRVPLVRERVGEFFGRTPLTSIDPDKVVAIGAAIQADILVGNKPDSELLLLDVIPLSLGLETMGGLVEKVIPRNTTIPVARAQEFTTFKDGQTAMSIHVMQGERELVQDCRSLARFALRGIPALPAGGAHIRVTFQVDADGLLSVTAMEKSTGVEASIQVKPSYGLTDGEIATMIKDSMSYAEQDIQARMLAEQKVEAARVLESLTSALAADAALLSAAERQAIDAAAEQVRAAAAGDDADAIKEAIKNIDTQTQEFAARRMDQSVRIALKGQSVDEV.

Belongs to the heat shock protein 70 family.

Functionally, chaperone involved in the maturation of iron-sulfur cluster-containing proteins. Has a low intrinsic ATPase activity which is markedly stimulated by HscB. Involved in the maturation of IscU. The sequence is that of Chaperone protein HscA from Klebsiella pneumoniae subsp. pneumoniae (strain ATCC 700721 / MGH 78578).